The sequence spans 270 residues: MSMQTAPIKKITLNHLQAKKNQEKIIAITAYDALFAQIFDPLVDVILVGDSLNMSFFNQNDTLSASVEMMLYHTKAVCAGAKTPFIITDMPFGSYKDEKTALKNAIRVYKETQASAIKLEGGKEKAKLVKTLTNEGVIVVGHIGLMPQFVRLDGGYKIKGKNEEQQKKLLEDALSLEEAGVGLLVLEGITTPIAQKITQKIKIPTIGIGSGKDCDGQILVWSDMLGFFDSFKPKFVREYLKGKELIQNAIKQYADDVKKGNFPNELESYH.

Positions 50 and 89 each coordinate Mg(2+). 3-methyl-2-oxobutanoate contacts are provided by residues 50-51 (DS), Asp-89, and Lys-118. Glu-120 is a binding site for Mg(2+). Residue Glu-187 is the Proton acceptor of the active site.

This sequence belongs to the PanB family. Homodecamer; pentamer of dimers. The cofactor is Mg(2+).

It is found in the cytoplasm. The enzyme catalyses 3-methyl-2-oxobutanoate + (6R)-5,10-methylene-5,6,7,8-tetrahydrofolate + H2O = 2-dehydropantoate + (6S)-5,6,7,8-tetrahydrofolate. Its pathway is cofactor biosynthesis; (R)-pantothenate biosynthesis; (R)-pantoate from 3-methyl-2-oxobutanoate: step 1/2. In terms of biological role, catalyzes the reversible reaction in which hydroxymethyl group from 5,10-methylenetetrahydrofolate is transferred onto alpha-ketoisovalerate to form ketopantoate. The chain is 3-methyl-2-oxobutanoate hydroxymethyltransferase from Helicobacter pylori (strain ATCC 700392 / 26695) (Campylobacter pylori).